The sequence spans 518 residues: Putative beta-xylosidase (518 aa).

D47 acts as the Proton acceptor in catalysis. E203 (proton donor) is an active-site residue.

The protein belongs to the glycosyl hydrolase 43 family.

It catalyses the reaction Hydrolysis of (1-&gt;4)-beta-D-xylans, to remove successive D-xylose residues from the non-reducing termini.. This chain is Putative beta-xylosidase, found in Xylanibacter ruminicola (Prevotella ruminicola).